We begin with the raw amino-acid sequence, 294 residues long: MSRWKDMNKDELERQFSPSQWSHRMSADDVIKSHVTALKEGTERARGLAQTLLNVPYGEGEGEKLDVYVPTTTSLDVPLVIYLHGGYWQFLSKEESGFMAVPLVHKGVVVVAVGYDIAPKGNMDVMVSQVRRSVVSVIQQYSHISGLYLCGHSAGAHLAAMILSTDWSQYSVTPQIKGAFLVSGIYDLLPILSTYVNEPLKMTEEVALRNSPSQLVPQLKLSSSNCDIVVAVAQNDSPEFRKQSEDYYKALESTEGLKVTLEDVPNTDHFNIIEQLVDGDYHLTQLLLKMMGKS.

Residues 1-14 (MSRWKDMNKDELER) show a composition bias toward basic and acidic residues. A disordered region spans residues 1–20 (MSRWKDMNKDELERQFSPSQ). Positions 84–88 (HGGYW) match the HGGXW motif. Ser153 functions as the Nucleophile in the catalytic mechanism. Residues Asp236 and His269 contribute to the active site.

This sequence belongs to the kynurenine formamidase family. In terms of assembly, homodimer.

It is found in the cytoplasm. The protein resides in the cytosol. Its subcellular location is the nucleus. It catalyses the reaction N-formyl-L-kynurenine + H2O = L-kynurenine + formate + H(+). Its pathway is amino-acid degradation; L-tryptophan degradation via kynurenine pathway; L-kynurenine from L-tryptophan: step 2/2. Catalyzes the hydrolysis of N-formyl-L-kynurenine to L-kynurenine, the second step in the kynurenine pathway of tryptophan degradation. Kynurenine may be further oxidized to nicotinic acid, NAD(H) and NADP(H). Required for elimination of toxic metabolites. The polypeptide is Kynurenine formamidase (afmid) (Salmo salar (Atlantic salmon)).